A 917-amino-acid polypeptide reads, in one-letter code: ABC transporter A family member 12 (917 aa).

Transmembrane regions (helical) follow at residues L34 to A54, I323 to I343, F377 to L397, F409 to I429, T435 to F455, and G508 to I528. The ABC transporter domain occupies I595–T832. G633–T640 provides a ligand contact to ATP.

Belongs to the ABC transporter superfamily. ABCA family. CPR flippase (TC 3.A.1.211) subfamily.

The protein localises to the membrane. The protein is ABC transporter A family member 12 (ABCA12) of Arabidopsis thaliana (Mouse-ear cress).